The sequence spans 250 residues: Exotoxin type A (250 aa).

The signal sequence occupies residues 1 to 30; sequence MENNKEVLKKMVFFVLMKFLGLTILPKGIC. Cys117 and Cys128 are oxidised to a cystine.

The protein belongs to the staphylococcal/streptococcal toxin family.

In terms of biological role, causative agent of the symptoms associated with scarlet fever, have been associated with streptococcal toxic shock-like disease and may play a role in the early events of rheumatic fever. The polypeptide is Exotoxin type A (speA) (Streptococcus pyogenes).